Consider the following 679-residue polypeptide: Methionine--tRNA ligase (679 aa).

The 'HIGH' region signature appears at 15–25 (PYANGSIHLGH). Zn(2+)-binding residues include C146, C149, C159, and C162. A 'KMSKS' region motif is present at residues 332–336 (KMSKS). K335 serves as a coordination point for ATP. Positions 577–679 (DFAKVDMRVA…AGALPGMPVK (103 aa)) constitute a tRNA-binding domain.

Belongs to the class-I aminoacyl-tRNA synthetase family. MetG type 1 subfamily. As to quaternary structure, homodimer. Requires Zn(2+) as cofactor.

It is found in the cytoplasm. It carries out the reaction tRNA(Met) + L-methionine + ATP = L-methionyl-tRNA(Met) + AMP + diphosphate. Its function is as follows. Is required not only for elongation of protein synthesis but also for the initiation of all mRNA translation through initiator tRNA(fMet) aminoacylation. In Sodalis glossinidius (strain morsitans), this protein is Methionine--tRNA ligase.